We begin with the raw amino-acid sequence, 400 residues long: Tryptophan synthase beta chain (400 aa).

Position 90 is an N6-(pyridoxal phosphate)lysine (Lys-90).

It belongs to the TrpB family. As to quaternary structure, tetramer of two alpha and two beta chains. Requires pyridoxal 5'-phosphate as cofactor.

It carries out the reaction (1S,2R)-1-C-(indol-3-yl)glycerol 3-phosphate + L-serine = D-glyceraldehyde 3-phosphate + L-tryptophan + H2O. It functions in the pathway amino-acid biosynthesis; L-tryptophan biosynthesis; L-tryptophan from chorismate: step 5/5. Functionally, the beta subunit is responsible for the synthesis of L-tryptophan from indole and L-serine. This is Tryptophan synthase beta chain from Alkaliphilus metalliredigens (strain QYMF).